The chain runs to 542 residues: Glutamyl-tRNA reductase 2, chloroplastic (542 aa).

Substrate-binding positions include Thr142–Arg145, Ser202, Glu207–Gln209, and Gln213. Cys143 serves as the catalytic Nucleophile. Gly284–Gly289 is an NADP(+) binding site.

Belongs to the glutamyl-tRNA reductase family. As to expression, found in all tissues examined.

The protein resides in the plastid. It localises to the chloroplast. The catalysed reaction is (S)-4-amino-5-oxopentanoate + tRNA(Glu) + NADP(+) = L-glutamyl-tRNA(Glu) + NADPH + H(+). Its pathway is porphyrin-containing compound metabolism; protoporphyrin-IX biosynthesis; 5-aminolevulinate from L-glutamyl-tRNA(Glu): step 1/2. Catalyzes the NADPH-dependent reduction of glutamyl-tRNA(Glu) to glutamate 1-semialdehyde (GSA). The protein is Glutamyl-tRNA reductase 2, chloroplastic (HEMA2) of Cucumis sativus (Cucumber).